The chain runs to 1156 residues: Condensin-2 complex subunit G2 (1156 aa).

Residues 460–498 (MLPALKFCLHDNSEKVRVAFVDMLLKIKAVRAAKFWKIC) form an HEAT repeat. Residues 587–611 (PNEDTEDEDDDEGDGEGIVRGDSEK) are disordered. The segment covering 589-601 (EDTEDEDDDEGDG) has biased composition (acidic residues).

In terms of assembly, component of the condensin-2 complex, which contains the smc2 and smc4 heterodimer, and three non SMC subunits that probably regulate the complex: ncaph2, ncapd3 and ncapg2.

The protein localises to the nucleus. Regulatory subunit of the condensin-2 complex, a complex which establishes mitotic chromosome architecture and is involved in physical rigidity of the chromatid axis. The sequence is that of Condensin-2 complex subunit G2 (ncapg2) from Xenopus laevis (African clawed frog).